Consider the following 395-residue polypeptide: Probable hercynylcysteine sulfoxide lyase (395 aa).

A disordered region spans residues Met1–Asp21. Position 220 is an N6-(pyridoxal phosphate)lysine (Lys220).

It belongs to the class-V pyridoxal-phosphate-dependent aminotransferase family. EgtE subfamily. Requires pyridoxal 5'-phosphate as cofactor.

The enzyme catalyses S-(hercyn-2-yl)-L-cysteine S-oxide + AH2 + H(+) = ergothioneine + pyruvate + A + NH4(+). It participates in amino-acid biosynthesis; ergothioneine biosynthesis. Functionally, probably catalyzes the conversion of hercynylcysteine sulfoxide to ergothioneine. ERG is one of the major redox buffers which protects bacteria against redox stressors and antibiotics; loss of ERG or mycothiol (MSH, the other major redox buffer in this bacteria) leads to respiratory alterations and bioenergetic deficiencies that negatively impact virulence. The chain is Probable hercynylcysteine sulfoxide lyase from Mycobacterium tuberculosis (strain CDC 1551 / Oshkosh).